A 184-amino-acid polypeptide reads, in one-letter code: Elongation factor P (184 aa).

The protein belongs to the elongation factor P family.

The protein resides in the cytoplasm. The protein operates within protein biosynthesis; polypeptide chain elongation. Functionally, involved in peptide bond synthesis. Stimulates efficient translation and peptide-bond synthesis on native or reconstituted 70S ribosomes in vitro. Probably functions indirectly by altering the affinity of the ribosome for aminoacyl-tRNA, thus increasing their reactivity as acceptors for peptidyl transferase. The sequence is that of Elongation factor P from Paracidovorax citrulli (strain AAC00-1) (Acidovorax citrulli).